Consider the following 411-residue polypeptide: Metacaspase-1B (411 aa).

The disordered stretch occupies residues 1–97 (MYHRHSAPPP…PPLEAQQFGN (97 aa)). Residues 7 to 65 (APPPPGRSRGYPPPQQQWPPQPYQYLPYPPQGPPPAHTFPPPAHRSYPSPYPTPPPHSP) are compositionally biased toward pro residues. Catalysis depends on residues His198 and Cys254.

This sequence belongs to the peptidase C14B family.

Its function is as follows. Involved in cell death (apoptosis). In Neosartorya fischeri (strain ATCC 1020 / DSM 3700 / CBS 544.65 / FGSC A1164 / JCM 1740 / NRRL 181 / WB 181) (Aspergillus fischerianus), this protein is Metacaspase-1B (casB).